The sequence spans 98 residues: MPIIYMNIMLAFTISLLGMLTYRSHLMSSLLCLEGMMLSLFIMSTLMALNMHFPLANIVPIALLVFAACEAAVGLSLLISISNTYGLDHIHNLSLLQC.

A run of 3 helical transmembrane segments spans residues 1 to 21, 29 to 49, and 58 to 78; these read MPIIYMNIMLAFTISLLGMLT, SLLCLEGMMLSLFIMSTLMAL, and IVPIALLVFAACEAAVGLSLL.

This sequence belongs to the complex I subunit 4L family. In terms of assembly, core subunit of respiratory chain NADH dehydrogenase (Complex I) which is composed of 45 different subunits.

The protein resides in the mitochondrion inner membrane. It catalyses the reaction a ubiquinone + NADH + 5 H(+)(in) = a ubiquinol + NAD(+) + 4 H(+)(out). Its function is as follows. Core subunit of the mitochondrial membrane respiratory chain NADH dehydrogenase (Complex I) which catalyzes electron transfer from NADH through the respiratory chain, using ubiquinone as an electron acceptor. Part of the enzyme membrane arm which is embedded in the lipid bilayer and involved in proton translocation. This Presbytis melalophos (Mitred leaf monkey) protein is NADH-ubiquinone oxidoreductase chain 4L (MT-ND4L).